Reading from the N-terminus, the 260-residue chain is Proliferating cell nuclear antigen (260 aa).

A DNA-binding region spans residues 61–80; the sequence is RCDRNLSMGMNLGSMAKILK.

The protein belongs to the PCNA family. As to quaternary structure, homotrimer. Forms a complex with activator 1 heteropentamer in the presence of ATP. Interacts with E2f. Interacts with the catalytic subunits of two DNA polymerase complexes: PolD1 from the delta complex and PolE1/DNApol-epsilon255 from the epsilon complex. In terms of tissue distribution, expressed at high levels in adult ovary.

It is found in the nucleus. Its subcellular location is the chromosome. The protein localises to the cytoplasm. Functionally, likely to be an auxiliary protein of DNA polymerase delta complex and is probably involved in the control of DNA replication and repair by increasing the polymerase's processibility. The chain is Proliferating cell nuclear antigen from Drosophila melanogaster (Fruit fly).